Reading from the N-terminus, the 379-residue chain is Retinoic acid receptor RXR-alpha-B (379 aa).

The segment covering 1 to 22 has biased composition (polar residues); it reads MPVPEQKQTVQLSSPMNAVSSS. A disordered region spans residues 1 to 24; sequence MPVPEQKQTVQLSSPMNAVSSSED. The segment at 1–53 is modulating; it reads MPVPEQKQTVQLSSPMNAVSSSEDIKPPLGLNGVMKVPAHRIGTLSLSLTKHI. The segment at residues 51–126 is a DNA-binding region (nuclear receptor); that stretch reads KHICAICGDR…MGMKREAVQE (76 aa). The Zn(2+) site is built by C54, C57, C71, and C74. The segment at 54-74 adopts an NR C4-type zinc-finger fold; the sequence is CAICGDRSSGKHYGVYSCEGC. Positions 79–84 are nuclear localization signal; sequence KRTVRK. The Zn(2+) site is built by C90, C96, C106, and C109. Residues 90–109 form an NR C4-type zinc finger; it reads CRDNKDCMIDKRQRNRCQYC. The hinge stretch occupies residues 120 to 141; it reads KREAVQEERQRAKERSEAEFGG. An NR LBD domain is found at 144–375; it reads NEDMPVEKIL…TFLMEMLEAP (232 aa). 9-cis-retinoate is bound by residues R233 and A244. 2 residues coordinate all-trans-retinoate: R233 and A244. The interval 265–285 is required for nuclear export; the sequence is RVLTELVSKMRDMQMDKTELG. Positions 364 to 375 are AF-2; that stretch reads IDTFLMEMLEAP.

The protein belongs to the nuclear hormone receptor family. NR2 subfamily. Homodimer. Heterodimer; with a rar molecule. Binds DNA preferentially as a rar/rxr heterodimer. Uniform expression from the blastula to mid-gastrula stages. At 12 hours post-fertilization (hpf), expressed strongly in the tail and weakly elsewhere. At 24 hpf, weak expression in the forebrain, eyes and pharyngeal endoderm and continued expression in the tail mesoderm. At 48 hpf, anterior expression limited to ventral cells underlying the head, medial expression in the pectoral fin bud mesoderm and continued tail expression.

It localises to the nucleus. Receptor for retinoic acid that acts as a transcription factor. Forms homo- or heterodimers with retinoic acid receptors (rars) and binds to target response elements in response to their ligands, all-trans or 9-cis retinoic acid, to regulate gene expression in various biological processes. The rar/rxr heterodimers bind to the retinoic acid response elements (RARE) composed of tandem 5'-AGGTCA-3' sites known as DR1-DR5 to regulate transcription. The high affinity ligand for rxrs is 9-cis retinoic acid. In the absence of ligand, the rar/rxr heterodimers associate with a multiprotein complex containing transcription corepressors that induce histone deacetylation, chromatin condensation and transcriptional suppression. On ligand binding, the corepressors dissociate from the receptors and coactivators are recruited leading to transcriptional activation. The polypeptide is Retinoic acid receptor RXR-alpha-B (rxrab) (Danio rerio (Zebrafish)).